An 86-amino-acid chain; its full sequence is Small ribosomal subunit protein uS15 (86 aa).

It belongs to the universal ribosomal protein uS15 family. As to quaternary structure, part of the 30S ribosomal subunit. Forms a bridge to the 50S subunit in the 70S ribosome, contacting the 23S rRNA.

Functionally, one of the primary rRNA binding proteins, it binds directly to 16S rRNA where it helps nucleate assembly of the platform of the 30S subunit by binding and bridging several RNA helices of the 16S rRNA. Its function is as follows. Forms an intersubunit bridge (bridge B4) with the 23S rRNA of the 50S subunit in the ribosome. The chain is Small ribosomal subunit protein uS15 from Endomicrobium trichonymphae.